The sequence spans 272 residues: MAAKVARLAAAASSLPFVCAVYAEEKESKSQLVKPKQLPIYCLPPLKSKYIEEQPGRLQKQFSSIRQTTGRYIGWCKDAFFFAKNGIVDSIQFGKDAYVYLKNPPPDFLPRVGIITISGLAGVVLARKDSRFKKIAYPLGLTTLGISVCYPAQAVVIAKITGKKVISASHQTYEAVRSLWTKKEDASKLQQESKSVTQENKKNREISNVQFESAIESRSSNRTESSPIESWSTKDPLPSSGTVKTTKFKPDPKLMDHGQSSPEDVDMYSTRS.

The N-terminal 24 residues, 1 to 24 (MAAKVARLAAAASSLPFVCAVYAE), are a transit peptide targeting the mitochondrion. Topologically, residues 28–107 (SKSQLVKPKQ…YVYLKNPPPD (80 aa)) are mitochondrial intermembrane. Residues 108–126 (FLPRVGIITISGLAGVVLA) form a helical membrane-spanning segment. Topologically, residues 127-134 (RKDSRFKK) are mitochondrial matrix. A helical membrane pass occupies residues 135 to 152 (IAYPLGLTTLGISVCYPA). Over 153–272 (QAVVIAKITG…EDVDMYSTRS (120 aa)) the chain is Mitochondrial intermembrane. Residues 187–272 (SKLQQESKSV…EDVDMYSTRS (86 aa)) are disordered. Composition is skewed to polar residues over residues 188–198 (KLQQESKSVTQ) and 206–245 (ISNV…TVKT).

This sequence belongs to the apolipoprotein O/MICOS complex subunit Mic27 family. In terms of assembly, component of the mitochondrial contact site and cristae organizing system (MICOS) complex (also known as MINOS or MitOS complex).

It is found in the mitochondrion inner membrane. In terms of biological role, component of the MICOS complex, a large protein complex of the mitochondrial inner membrane that plays crucial roles in the maintenance of crista junctions, inner membrane architecture, and formation of contact sites to the outer membrane. This chain is MICOS complex subunit MIC27 (APOOL), found in Gallus gallus (Chicken).